The chain runs to 317 residues: Aspartate carbamoyltransferase catalytic subunit (317 aa).

2 residues coordinate carbamoyl phosphate: arginine 65 and threonine 66. Residue lysine 93 coordinates L-aspartate. Carbamoyl phosphate is bound by residues arginine 115, histidine 145, and glutamine 148. Residues arginine 178 and arginine 233 each contribute to the L-aspartate site. 2 residues coordinate carbamoyl phosphate: glycine 274 and proline 275.

Belongs to the aspartate/ornithine carbamoyltransferase superfamily. ATCase family. In terms of assembly, heterododecamer (2C3:3R2) of six catalytic PyrB chains organized as two trimers (C3), and six regulatory PyrI chains organized as three dimers (R2).

The enzyme catalyses carbamoyl phosphate + L-aspartate = N-carbamoyl-L-aspartate + phosphate + H(+). It functions in the pathway pyrimidine metabolism; UMP biosynthesis via de novo pathway; (S)-dihydroorotate from bicarbonate: step 2/3. Catalyzes the condensation of carbamoyl phosphate and aspartate to form carbamoyl aspartate and inorganic phosphate, the committed step in the de novo pyrimidine nucleotide biosynthesis pathway. This is Aspartate carbamoyltransferase catalytic subunit from Methylobacillus flagellatus (strain ATCC 51484 / DSM 6875 / VKM B-1610 / KT).